The following is a 247-amino-acid chain: MSVVSMKQLLEAGVHFGHQAKRWNPKMAKYIFTERNGIHVIDLHKSLKKIEEAYEEMRKIAEDGGKVLFVGTKKQAQEAIKEQAERSGMYYVNSRWLGGMLTNFSTIKKRIERMKELEKLDAEGILDTDYTKKEAAEFRKELSKLSKNLSGIRDMEKVPDAIYVVDVKMEELPVKEAHLLGIPVFAMIDTNVDPDLITYPIPANDDAIRSVKLITSVIANAIVEGNQGIENVEPQSEEVNVEEGSAE.

This sequence belongs to the universal ribosomal protein uS2 family.

The protein is Small ribosomal subunit protein uS2 of Fusobacterium nucleatum subsp. nucleatum (strain ATCC 25586 / DSM 15643 / BCRC 10681 / CIP 101130 / JCM 8532 / KCTC 2640 / LMG 13131 / VPI 4355).